Consider the following 200-residue polypeptide: Small ribosomal subunit protein mS26 (200 aa).

The N-terminal 27 residues, 1–27 (MLRALNRLAARPGGQPPTLLLLPVRGR), are a transit peptide targeting the mitochondrion. Lysine 159 bears the N6-acetyllysine mark.

Belongs to the mitochondrion-specific ribosomal protein mS26 family. In terms of assembly, component of the mitochondrial ribosome small subunit (28S) which comprises a 12S rRNA and about 30 distinct proteins.

Its subcellular location is the mitochondrion. The chain is Small ribosomal subunit protein mS26 (Mrps26) from Rattus norvegicus (Rat).